Reading from the N-terminus, the 313-residue chain is Sideroflexin-4 (313 aa).

2 helical membrane-spanning segments follow: residues 87-107 and 141-161; these read AAFL…DTGI and TLLG…PHLF. Lys173 carries the post-translational modification N6-acetyllysine. A run of 3 helical transmembrane segments spans residues 175–191, 230–247, and 269–289; these read TLPI…NVFA, AVLF…IHIF, and FFMM…IGQI.

This sequence belongs to the sideroflexin family. As to expression, largely restricted to kidney, brain and heart.

It is found in the mitochondrion inner membrane. Functionally, mitochondrial amino-acid transporter. Does not act as a serine transporter: not able to mediate transport of serine into mitochondria. This chain is Sideroflexin-4, found in Mus musculus (Mouse).